A 323-amino-acid chain; its full sequence is MKKKKTWKRFLHFSSAALAAGLIFTSAAPAEAAFWGASNELLHDPTMIKEGSSWYALGTGLTEERGLRVLKSSDAKNWTVQKSIFTTPLSWWSNYVPNYGQNQWAPDIQYYNGKYWLYYSVSSFGSNTSAIGLASSTSISSGGWKDEGLVIRSTSSNNYNAIDPELTFDKDGNPWLAFGSFWSGIKLTKLDKSTMKPTGSLYSIAARPNNGGALEAPTLTYQNGYYYLMVSFDKCCDGVNSTYKIAYGRSKSITGPYLDKSGKSMLEGGGTILDSGNDQWKGPGGQDIVNGNILVRHAYDANDNGIPKLLINDLNWSSGWPSY.

The signal sequence occupies residues 1–32 (MKKKKTWKRFLHFSSAALAAGLIFTSAAPAEA). Asp44 (proton acceptor) is an active-site residue. Substrate is bound at residue Asp44. Asp107 serves as a coordination point for Ca(2+). Substrate-binding positions include Gly125 and 160 to 163 (NAID). Position 165 (Glu165) interacts with Ca(2+). 180–182 (SFW) is a binding site for substrate. Glu215 functions as the Proton donor in the catalytic mechanism. Asp287 lines the Ca(2+) pocket.

This sequence belongs to the glycosyl hydrolase 43 family. Requires Ca(2+) as cofactor.

It localises to the secreted. It catalyses the reaction Endohydrolysis of (1-&gt;5)-alpha-arabinofuranosidic linkages in (1-&gt;5)-arabinans.. The protein operates within glycan metabolism; L-arabinan degradation. Functionally, involved in the degradation of arabinan and is a key enzyme in the complete degradation of the plant cell wall. Catalyzes the internal cleavage of alpha-(1-&gt;5)-L-arabinofuranosyl residues of linear 1,5-alpha-L-arabinan and of branched sugar beet arabinan. It displays no activity against heavily substituted arabinans or a range of other polysaccharides (larch wood arabinogalactan, wheat arabinoxylan and p-nitrophenyl-alpha-L-arabinofuranoside). The enzyme activity is progressively reduced as alpha-(1-&gt;5)-chains become shorter or more highly substituted. The sequence is that of Extracellular endo-alpha-(1-&gt;5)-L-arabinanase 1 (abnA) from Bacillus subtilis (strain 168).